A 160-amino-acid polypeptide reads, in one-letter code: Serine-protein kinase RsbW (160 aa).

This sequence belongs to the anti-sigma-factor family.

It carries out the reaction L-seryl-[protein] + ATP = O-phospho-L-seryl-[protein] + ADP + H(+). The enzyme catalyses L-threonyl-[protein] + ATP = O-phospho-L-threonyl-[protein] + ADP + H(+). Its function is as follows. Negative regulator of sigma-B activity. Phosphorylates and inactivates its specific antagonist protein, RsbV. Upon phosphorylation of RsbV, RsbW is released and binds to sigma-B, thereby blocking its ability to form an RNA polymerase holoenzyme (E-sigma-B). The chain is Serine-protein kinase RsbW from Bacillus cereus (strain AH187).